The following is an 89-amino-acid chain: Small ribosomal subunit protein uS15 (89 aa).

The protein belongs to the universal ribosomal protein uS15 family. Part of the 30S ribosomal subunit. Forms a bridge to the 50S subunit in the 70S ribosome, contacting the 23S rRNA.

Its function is as follows. One of the primary rRNA binding proteins, it binds directly to 16S rRNA where it helps nucleate assembly of the platform of the 30S subunit by binding and bridging several RNA helices of the 16S rRNA. In terms of biological role, forms an intersubunit bridge (bridge B4) with the 23S rRNA of the 50S subunit in the ribosome. This is Small ribosomal subunit protein uS15 from Laribacter hongkongensis (strain HLHK9).